The sequence spans 99 residues: Protein RnfH (99 aa).

Belongs to the UPF0125 (RnfH) family.

The polypeptide is Protein RnfH (Buchnera aphidicola subsp. Acyrthosiphon pisum (strain 5A)).